We begin with the raw amino-acid sequence, 552 residues long: Hyaluronan synthase 2 (552 aa).

The Cytoplasmic segment spans residues 1–11 (MYCERFICILR). A helical transmembrane segment spans residues 12–32 (ILGTTLFGVSLLLGITAAYIV). The Extracellular segment spans residues 33–45 (GYQFIQTDNYYFS). The helical transmembrane segment at 46–66 (FGLYGAILASHLIIQSLFAYL) threads the bilayer. The Cytoplasmic segment spans residues 67 to 374 (EHRKMKRSLE…NAMWFHKHHL (308 aa)). Residues 375–395 (WMTYEAVITGFFPFFLIATVI) traverse the membrane as a helical segment. Residues 396 to 402 (QLFYRGK) are Extracellular-facing. Residues 403 to 423 (IWNILLFLLTVQLVGLIKSSF) traverse the membrane as a helical segment. The Cytoplasmic portion of the chain corresponds to 424–429 (ASFLRG). The helical transmembrane segment at 430–450 (NIVMVFMSLYSVLYMSSLLPA) threads the bilayer. The Extracellular segment spans residues 451-475 (KMFAIATINKAGWGTSGRKTIVVNF). The helical transmembrane segment at 476 to 496 (IGLIPVSIWFTILLGRVIFTI) threads the bilayer. Over 497 to 510 (YKESKKPFSESKTT) the chain is Cytoplasmic. Residues 511 to 531 (VLVIGTILYACYWVLLLTLYL) traverse the membrane as a helical segment. At 532–552 (VLITKCGRRKKEQHYDMVLDV) the chain is on the extracellular side.

The protein belongs to the NodC/HAS family. As to quaternary structure, homodimer; dimerization promotes enzymatic activity. Mg(2+) serves as cofactor.

Its subcellular location is the cell membrane. The protein localises to the endoplasmic reticulum membrane. It localises to the vesicle. It is found in the golgi apparatus membrane. The protein resides in the lysosome. The enzyme catalyses [hyaluronan](n) + UDP-N-acetyl-alpha-D-glucosamine = N-acetyl-beta-D-glucosaminyl-(1-&gt;4)-[hyaluronan](n) + UDP + H(+). It carries out the reaction N-acetyl-beta-D-glucosaminyl-(1-&gt;4)-[hyaluronan](n) + UDP-alpha-D-glucuronate = [hyaluronan](n+1) + UDP + H(+). Its pathway is glycan biosynthesis; hyaluronan biosynthesis. In terms of biological role, catalyzes the addition of GlcNAc or GlcUA monosaccharides to the nascent hyaluronan polymer. Therefore, it is essential to hyaluronan synthesis a major component of most extracellular matrices that has a structural role in tissues architectures and regulates cell adhesion, migration and differentiation. This is one of three isoenzymes responsible for cellular hyaluronan synthesis and it is particularly responsible for the synthesis of high molecular mass hyaluronan. This is Hyaluronan synthase 2 (HAS2) from Gallus gallus (Chicken).